Here is a 426-residue protein sequence, read N- to C-terminus: Histidine--tRNA ligase (426 aa).

This sequence belongs to the class-II aminoacyl-tRNA synthetase family. In terms of assembly, homodimer.

The protein localises to the cytoplasm. The enzyme catalyses tRNA(His) + L-histidine + ATP = L-histidyl-tRNA(His) + AMP + diphosphate + H(+). The chain is Histidine--tRNA ligase from Streptococcus agalactiae serotype III (strain NEM316).